Reading from the N-terminus, the 246-residue chain is Biosynthetic peptidoglycan transglycosylase (246 aa).

Residues 28–48 traverse the membrane as a helical segment; the sequence is FALFLVLFLSSVVLFRFVPVP.

Belongs to the glycosyltransferase 51 family.

Its subcellular location is the cell inner membrane. It catalyses the reaction [GlcNAc-(1-&gt;4)-Mur2Ac(oyl-L-Ala-gamma-D-Glu-L-Lys-D-Ala-D-Ala)](n)-di-trans,octa-cis-undecaprenyl diphosphate + beta-D-GlcNAc-(1-&gt;4)-Mur2Ac(oyl-L-Ala-gamma-D-Glu-L-Lys-D-Ala-D-Ala)-di-trans,octa-cis-undecaprenyl diphosphate = [GlcNAc-(1-&gt;4)-Mur2Ac(oyl-L-Ala-gamma-D-Glu-L-Lys-D-Ala-D-Ala)](n+1)-di-trans,octa-cis-undecaprenyl diphosphate + di-trans,octa-cis-undecaprenyl diphosphate + H(+). It functions in the pathway cell wall biogenesis; peptidoglycan biosynthesis. Its function is as follows. Peptidoglycan polymerase that catalyzes glycan chain elongation from lipid-linked precursors. The sequence is that of Biosynthetic peptidoglycan transglycosylase from Pasteurella multocida (strain Pm70).